A 240-amino-acid polypeptide reads, in one-letter code: Sulfite dehydrogenase subunit B (240 aa).

4Fe-4S ferredoxin-type domains follow at residues 4–34, 64–95, and 97–126; these read LALV…WAGP, TETV…KRPD, and GVVL…LDAQ. Residues cysteine 13, cysteine 16, cysteine 19, cysteine 23, cysteine 73, cysteine 76, cysteine 81, cysteine 85, cysteine 106, cysteine 109, cysteine 112, and cysteine 116 each coordinate [4Fe-4S] cluster.

Forms a heterotrimeric membrane-bound complex composed of a catalytic heterodimer (SoeAB) and a membrane anchor protein (SoeC). [4Fe-4S] cluster is required as a cofactor.

It is found in the cell inner membrane. Functionally, part of the SoeABC complex that catalyzes the oxidation of sulfite to sulfate. SoeB is probably the electron transfer subunit. The protein is Sulfite dehydrogenase subunit B of Allochromatium vinosum (strain ATCC 17899 / DSM 180 / NBRC 103801 / NCIMB 10441 / D) (Chromatium vinosum).